A 353-amino-acid chain; its full sequence is Alanine racemase (353 aa).

The Proton acceptor; specific for D-alanine role is filled by lysine 33. Lysine 33 carries the N6-(pyridoxal phosphate)lysine modification. Position 129 (arginine 129) interacts with substrate. The Proton acceptor; specific for L-alanine role is filled by tyrosine 250. Residue methionine 298 coordinates substrate.

The protein belongs to the alanine racemase family. Requires pyridoxal 5'-phosphate as cofactor.

The enzyme catalyses L-alanine = D-alanine. It functions in the pathway amino-acid biosynthesis; D-alanine biosynthesis; D-alanine from L-alanine: step 1/1. Functionally, catalyzes the interconversion of L-alanine and D-alanine. May also act on other amino acids. The protein is Alanine racemase (alr) of Azoarcus sp. (strain BH72).